A 319-amino-acid chain; its full sequence is ATP-dependent 6-phosphofructokinase (319 aa).

Residue G11 participates in ATP binding. 21–25 (RAVVR) is a binding site for ADP. ATP contacts are provided by residues 72-73 (RC) and 102-105 (GDGS). D103 contacts Mg(2+). A substrate-binding site is contributed by 125–127 (TID). D127 (proton acceptor) is an active-site residue. R154 serves as a coordination point for ADP. Residues R162 and 169–171 (MGR) each bind substrate. ADP contacts are provided by residues 185–187 (GAE), R211, and 213–215 (KKH). Residues E222, R243, and 249–252 (HIQR) contribute to the substrate site.

This sequence belongs to the phosphofructokinase type A (PFKA) family. ATP-dependent PFK group I subfamily. Prokaryotic clade 'B1' sub-subfamily. As to quaternary structure, homotetramer. It depends on Mg(2+) as a cofactor.

The protein localises to the cytoplasm. It catalyses the reaction beta-D-fructose 6-phosphate + ATP = beta-D-fructose 1,6-bisphosphate + ADP + H(+). It functions in the pathway carbohydrate degradation; glycolysis; D-glyceraldehyde 3-phosphate and glycerone phosphate from D-glucose: step 3/4. Its activity is regulated as follows. Allosterically activated by ADP and other diphosphonucleosides, and allosterically inhibited by phosphoenolpyruvate. In terms of biological role, catalyzes the phosphorylation of D-fructose 6-phosphate to fructose 1,6-bisphosphate by ATP, the first committing step of glycolysis. In Bacillus pumilus (strain SAFR-032), this protein is ATP-dependent 6-phosphofructokinase.